Here is a 201-residue protein sequence, read N- to C-terminus: Small ribosomal subunit protein uS5 (201 aa).

Positions 1 to 28 are disordered; it reads MARGEQQRGEGGQRRDRRDRNAPEERVD. The S5 DRBM domain maps to 31–94; that stretch reads IVEKLVHINR…EEAKKTMIRV (64 aa). A disordered region spans residues 173–201; that stretch reads QIAAKRGKKVGDILGRRADGASAPEAIEG. Over residues 181-191 the composition is skewed to basic and acidic residues; sequence KVGDILGRRAD.

The protein belongs to the universal ribosomal protein uS5 family. In terms of assembly, part of the 30S ribosomal subunit. Contacts proteins S4 and S8.

In terms of biological role, with S4 and S12 plays an important role in translational accuracy. Functionally, located at the back of the 30S subunit body where it stabilizes the conformation of the head with respect to the body. The polypeptide is Small ribosomal subunit protein uS5 (Caulobacter vibrioides (strain ATCC 19089 / CIP 103742 / CB 15) (Caulobacter crescentus)).